We begin with the raw amino-acid sequence, 222 residues long: Glutathione S-transferase A1 (222 aa).

M1 bears the N-acetylmethionine mark. Residue A2 is modified to N-acetylalanine; in Glutathione S-transferase A1, N-terminally processed. The GST N-terminal domain occupies 3-83; that stretch reads GKPTLHYFNG…YIATKYNLYG (81 aa). K4 is modified (N6-succinyllysine). Glutathione-binding positions include Y9, K45, 54–55, and 67–68; these read QV and QT. A GST C-terminal domain is found at 85–208; the sequence is DMKERALIDM…QPGSQRKPPT (124 aa).

This sequence belongs to the GST superfamily. Alpha family. In terms of assembly, homodimer or heterodimer of GSTA1 and GSTA2. As to expression, expressed in corpus luteum, adrenal gland, testis, liver, lung, thyroid and kidney.

Its subcellular location is the cytoplasm. It carries out the reaction RX + glutathione = an S-substituted glutathione + a halide anion + H(+). The enzyme catalyses prostaglandin A2 + glutathione = prostaglandin A2-S-(R)-glutathione. It catalyses the reaction prostaglandin J2 + glutathione = prostaglandin J2-S-(R)-glutathione. The catalysed reaction is (13S)-hydroperoxy-(9Z,11E)-octadecadienoate + 2 glutathione = (13S)-hydroxy-(9Z,11E)-octadecadienoate + glutathione disulfide + H2O. It carries out the reaction androst-5-ene-3,17-dione = androst-4-ene-3,17-dione. In terms of biological role, glutathione S-transferase that catalyzes the nucleophilic attack of the sulfur atom of glutathione on the electrophilic groups of a wide range of exogenous and endogenous compounds. Involved in the formation of glutathione conjugates of both prostaglandin A2 (PGA2) and prostaglandin J2 (PGJ2). It also catalyzes the isomerization of D5-androstene-3,17-dione (AD) into D4-androstene-3,17-dione and may therefore play an important role in hormone biosynthesis. Through its glutathione-dependent peroxidase activity toward the fatty acid hydroperoxide (13S)-hydroperoxy-(9Z,11E)-octadecadienoate/13-HPODE it is also involved in the metabolism of oxidized linoleic acid. This chain is Glutathione S-transferase A1 (GSTA1), found in Bos taurus (Bovine).